Consider the following 640-residue polypeptide: Dextranase (640 aa).

Positions 1 to 32 (MPGTGLGRLAKHVTAAAAVFLISTGAVLPAQA) are cleaved as a signal peptide.

It belongs to the glycosyl hydrolase 49 family.

The protein localises to the secreted. It carries out the reaction Endohydrolysis of (1-&gt;6)-alpha-D-glucosidic linkages in dextran.. The chain is Dextranase from Arthrobacter globiformis.